The following is a 558-amino-acid chain: Biotin biosynthesis bifunctional protein BioHC (558 aa).

A carboxylesterase region spans residues 1–287 (MSNIEPSNVK…FSQPAKIAQI (287 aa)). Substrate is bound by residues Trp-56, 115–116 (SL), and 182–186 (FGLLQ). The active-site Nucleophile is Ser-115. Residues Asp-246 and His-274 contribute to the active site. Substrate is bound at residue His-274. The interval 288–558 (MLARVHAKRN…EVGFYQLLKV (271 aa)) is malonyl-ACP O-methyltransferase.

This sequence in the N-terminal section; belongs to the AB hydrolase superfamily. Carboxylesterase BioH family. It in the C-terminal section; belongs to the methyltransferase superfamily.

The enzyme catalyses a carboxylic ester + H2O = an alcohol + a carboxylate + H(+). It catalyses the reaction malonyl-[ACP] + S-adenosyl-L-methionine = malonyl-[ACP] methyl ester + S-adenosyl-L-homocysteine. The protein operates within cofactor biosynthesis; biotin biosynthesis. Functionally, converts the free carboxyl group of a malonyl-thioester to its methyl ester by transfer of a methyl group from S-adenosyl-L-methionine (SAM). It allows to synthesize pimeloyl-ACP via the fatty acid synthetic pathway. In terms of biological role, the physiological role of BioH is to remove the methyl group introduced by BioC when the pimeloyl moiety is complete. It allows to synthesize pimeloyl-ACP via the fatty acid synthetic pathway through the hydrolysis of the ester bonds of pimeloyl-ACP esters. The sequence is that of Biotin biosynthesis bifunctional protein BioHC (bioC) from Saccharophagus degradans (strain 2-40 / ATCC 43961 / DSM 17024).